A 293-amino-acid chain; its full sequence is CDP-abequose synthase (293 aa).

Threonine 113 is a substrate binding site. Residue tyrosine 130 is the Proton acceptor of the active site.

This sequence belongs to the NAD(P)-dependent epimerase/dehydratase family.

It catalyses the reaction CDP-alpha-D-abequose + NADP(+) = CDP-4-dehydro-3,6-dideoxy-alpha-D-glucose + NADPH + H(+). Its pathway is bacterial outer membrane biogenesis; LPS O-antigen biosynthesis. This chain is CDP-abequose synthase, found in Salmonella muenchen.